Reading from the N-terminus, the 641-residue chain is 1-deoxy-D-xylulose-5-phosphate synthase (641 aa).

Thiamine diphosphate contacts are provided by residues His-71 and 112–114; that span reads SHA. Asp-144 contributes to the Mg(2+) binding site. Thiamine diphosphate-binding positions include 145 to 146, Asn-173, Tyr-284, and Glu-365; that span reads GA. Mg(2+) is bound at residue Asn-173.

Belongs to the transketolase family. DXPS subfamily. As to quaternary structure, homodimer. Mg(2+) serves as cofactor. Thiamine diphosphate is required as a cofactor.

It carries out the reaction D-glyceraldehyde 3-phosphate + pyruvate + H(+) = 1-deoxy-D-xylulose 5-phosphate + CO2. It functions in the pathway metabolic intermediate biosynthesis; 1-deoxy-D-xylulose 5-phosphate biosynthesis; 1-deoxy-D-xylulose 5-phosphate from D-glyceraldehyde 3-phosphate and pyruvate: step 1/1. Its function is as follows. Catalyzes the acyloin condensation reaction between C atoms 2 and 3 of pyruvate and glyceraldehyde 3-phosphate to yield 1-deoxy-D-xylulose-5-phosphate (DXP). This Mycobacterium avium (strain 104) protein is 1-deoxy-D-xylulose-5-phosphate synthase.